The chain runs to 149 residues: Transcriptional repressor NrdR (149 aa).

Residues 3-34 fold into a zinc finger; the sequence is CPFCSATDTKVIDSRLVADGHQVRRRRECVQC. In terms of domain architecture, ATP-cone spans 49-139; the sequence is PRVVKQDGSR…VYRAFEDVSE (91 aa).

It belongs to the NrdR family. It depends on Zn(2+) as a cofactor.

Negatively regulates transcription of bacterial ribonucleotide reductase nrd genes and operons by binding to NrdR-boxes. The sequence is that of Transcriptional repressor NrdR from Shewanella piezotolerans (strain WP3 / JCM 13877).